We begin with the raw amino-acid sequence, 562 residues long: MSAMALSSTMALSLPQSSMSLSHCRHNRITILIPSSSLRRRGGSSIRCSTISTSNSAAAANYQNKNIGTNGVDGGGGGGGVLDCVIVGGGISGLCIAQALSTKYSNLSTNFIVTEAKDRVGGNITTMEADGYLWEEGPNSFQPSDAVLTMAVDSGLKEELVLGDPNSPRFVLWNGKLRPVPSKLTDLPFFDLMSFPGKIRAGLGALGLRPSPPAHEESVEQFVRRNLGDEVFERLIEPFCSGVYAGDPSKLSMKAAFGRVWVLEQKGGSIIGGTLKTIQERKDNPKPPRDPRLPKPKGQTVGSFRKGLSMLPTAISERLGNKVKVSWTLSGIAKSSNGEYNLTYETPDGLVSVRTKSVVMTVPSYVASSLLRPLSDVAAESLSKFHYPPVAAVSLSYPKEAIRSECLIDGELKGFGQLHSRSQGVETLGTIYSSSLFPGRAPPGRTLILNYIGGDTNPGILDKTKDELAEAVDRDLRRILINPNAKAPRVLGVRVWPQAIPQFLIGHFDLLDAAKAALTDGGHKGLFLGGNYVSGVALGRCIEGAYESAAEVVDFLSQYSDK.

The N-terminal 48 residues, 1-48, are a transit peptide targeting the chloroplast; it reads MSAMALSSTMALSLPQSSMSLSHCRHNRITILIPSSSLRRRGGSSIRC. Residues 88–93, 115–116, and 137–140 each bind FAD; these read GGGISG, EA, and GPNS. The tract at residues 274 to 302 is disordered; it reads TLKTIQERKDNPKPPRDPRLPKPKGQTVG. Residues 278–293 show a composition bias toward basic and acidic residues; it reads IQERKDNPKPPRDPRL. Residues valine 323 and 536–538 contribute to the FAD site; that span reads VAL.

The protein belongs to the protoporphyrinogen/coproporphyrinogen oxidase family. Protoporphyrinogen oxidase subfamily. FAD is required as a cofactor.

Its subcellular location is the plastid. It is found in the chloroplast thylakoid membrane. The protein localises to the chloroplast inner membrane. The catalysed reaction is protoporphyrinogen IX + 3 O2 = protoporphyrin IX + 3 H2O2. The protein operates within porphyrin-containing compound metabolism; protoporphyrin-IX biosynthesis; protoporphyrin-IX from protoporphyrinogen-IX: step 1/1. Its pathway is porphyrin-containing compound metabolism; chlorophyll biosynthesis. Functionally, catalyzes the 6-electron oxidation of protoporphyrinogen-IX to form protoporphyrin-IX. The protein is Protoporphyrinogen oxidase 1, chloroplastic of Spinacia oleracea (Spinach).